The following is a 334-amino-acid chain: Mitochondrial ribosome-associated GTPase 1 (334 aa).

The 174-residue stretch at 36 to 209 (AKGLKKMQSS…LLDTPGVLAP (174 aa)) folds into the CP-type G domain. GTP contacts are provided by residues 83–86 (NKMD), 153–158 (NVGKSS), and glycine 205.

This sequence belongs to the TRAFAC class YlqF/YawG GTPase family. MTG1 subfamily. As to quaternary structure, associates with the mitochondrial ribosome large subunit; the association occurs in a GTP-dependent manner.

It localises to the mitochondrion inner membrane. Plays a role in the regulation of the mitochondrial ribosome assembly and of translational activity. Displays mitochondrial GTPase activity. This Homo sapiens (Human) protein is Mitochondrial ribosome-associated GTPase 1 (MTG1).